The following is a 3117-amino-acid chain: Centrosome-associated protein 350 (3117 aa).

Residues 1 to 24 form a disordered region; it reads MRSSKSKEVPLPNPRNSQSKDTVQ. The segment covering 14-24 has biased composition (polar residues); the sequence is PRNSQSKDTVQ. S86, S139, S142, and S218 each carry phosphoserine. Disordered regions lie at residues 249-275, 436-514, 548-625, and 671-722; these read PKAL…ILKR, ILGP…NKQE, TVEL…TEQK, and LEEP…PPQP. Low complexity predominate over residues 255–267; sequence TDSSPSSTSTSNS. Basic and acidic residues predominate over residues 469–501; that stretch reads GRAESDPRLDVLHRHLQRNSERSRSKSRSENNI. Phosphoserine is present on residues S473 and S507. Residues 563–573 are compositionally biased toward basic residues; the sequence is PRSHSPVKRKP. Composition is skewed to basic and acidic residues over residues 591–625 and 694–703; these read YDTD…TEQK and ESDKENKVQE. The stretch at 598–645 forms a coiled coil; that stretch reads QYIVRQQEERKRKQNEEKKAQKEATEQKNKRLQELYRKQKEAFTKVKN. S695 carries the phosphoserine modification. Residues 705-718 show a composition bias toward low complexity; that stretch reads PPSASSSSDMSLSE. At T878 the chain carries Phosphothreonine. Residue S939 is modified to Phosphoserine. Residues 981–992 are compositionally biased toward low complexity; it reads SVSEGPLLSEGS. Positions 981–1002 are disordered; that stretch reads SVSEGPLLSEGSLSEEEGDQDG. At S1061 the chain carries Phosphoserine. Positions 1081–1298 are disordered; it reads EDKLDRGTST…GFKPNAPLTD (218 aa). The span at 1087–1102 shows a compositional bias: polar residues; it reads GTSTSRPLNATATPLS. Residues 1135–1144 show a composition bias toward basic and acidic residues; it reads QEDHSNRKSA. Low complexity-rich tracts occupy residues 1153 to 1172 and 1251 to 1267; these read TSQH…STSS and QKTP…KSLQ. Phosphothreonine is present on T1253. Phosphoserine occurs at positions 1256 and 1259. A compositionally biased stretch (polar residues) spans 1272 to 1283; the sequence is GTSSERSKSSVM. Residues 1369–1411 are a coiled coil; sequence IKAQQQRHERDLALLKLKAEQEALESQRQLEETRNKAAQVHAE. Disordered regions lie at residues 1494–1674 and 1794–1854; these read TRTE…GGQD and KLKS…SRMD. Residues 1503–1512 are compositionally biased toward polar residues; it reads PSVSLSQSKE. Low complexity-rich tracts occupy residues 1522–1535 and 1543–1556; these read YSAS…SSGY and SSGS…SVPS. The segment covering 1558 to 1571 has biased composition (basic and acidic residues); the sequence is KENEKKLNGEKIES. Phosphoserine is present on S1613. The span at 1631–1647 shows a compositional bias: basic and acidic residues; sequence ESHRRFNMEKRRGHHDD. A phosphoserine mark is found at S1648 and S1653. Residues 1707–1800 are a coiled coil; the sequence is KALKEKTKAE…LQEKLKSAGE (94 aa). The span at 1794–1815 shows a compositional bias: basic and acidic residues; that stretch reads KLKSAGESKLDSHSDDDTKDNK. The residue at position 1818 (S1818) is a Phosphoserine. Low complexity predominate over residues 1827 to 1841; sequence RSPSPISISSSETSS. The stretch at 1856–1899 forms a coiled coil; the sequence is KFLTKREQKLMQRRQHAEELLEWKRRLDAEEAEIRQMEKQALAA. The segment covering 1903 to 1925 has biased composition (basic and acidic residues); it reads ELIKPKTPKKELEDQRTEQKEIA. Disordered regions lie at residues 1903-2020, 2107-2221, 2329-2356, and 2407-2432; these read ELIK…QCHL, ELSQ…ESGD, LKER…QKNT, and KDSQ…FGSN. A Phosphoserine modification is found at S1936. Positions 1983-2005 are enriched in polar residues; it reads ELESSTSPSKHSLPKSCTSVSKQ. Positions 2051–2110 form a coiled coil; it reads EGRIRALKDELRKRKSVVNQLKKEQKKRQKERLKAQEASLIKQLESYDEFIKKTEAELSQ. Over residues 2111-2129 the composition is skewed to polar residues; that stretch reads DLETSPTAKPQIKTLSSAS. S2115 bears the Phosphoserine mark. Residues 2141-2170 are compositionally biased toward basic and acidic residues; the sequence is HRSETAKNWKSLTESERSRGSLESIAEHVD. Residues 2173–2184 show a composition bias toward polar residues; it reads LSGSERSVSERS. The segment covering 2191–2201 has biased composition (basic and acidic residues); the sequence is RVNEWDSRTED. Phosphothreonine is present on T2204. S2206 bears the Phosphoserine mark. Composition is skewed to basic and acidic residues over residues 2329–2338 and 2407–2417; these read LKERQSDQDM and KDSQSCRDKPQ. Over residues 2419–2432 the composition is skewed to polar residues; that stretch reads MRSSTSGATSFGSN. S2431 and S2460 each carry phosphoserine. A compositionally biased stretch (basic and acidic residues) spans 2465–2478; the sequence is MKSKERSDVEHEQQ. The disordered stretch occupies residues 2465 to 2485; that stretch reads MKSKERSDVEHEQQVTESPSL. The 43-residue stretch at 2517–2559 folds into the CAP-Gly domain; that stretch reads GETSFAKGFWAGVELDKPEGNNNGTYDGIAYFECKEKHGIFAP. Position 2689 is a phosphothreonine (T2689). Residues 2719–2752 adopt a coiled-coil conformation; it reads LLDLLTREKNQLEAQLKSSLNEEKKSKQQLEKIS. Residues S2830 and S2839 each carry the phosphoserine modification.

Part of a ternary complex that contains CEP350, CEP43 and MAPRE1. Interacts (via C-terminus) directly with CEP43 (via N-terminus). Interacts with NR1H3, PPARA, PPARD and PPARG. Interacts directly with microtubules. Interacts with the fusion protein CEP43-FGFR1, and by doing so recruits and activates PI3K and PLC-gamma. Interacts with CYLD. Interacts with CFAP157. Interacts with CEP19 (via C-terminus). Interacts with CEP78; promoting CEP78 localization to centrosome and centriole. Post-translationally, phosphorylated during mitosis. As to expression, detected in heart, brain, skeletal muscle, testis, placenta, lung, liver, kidney and pancreas.

Its subcellular location is the cytoplasm. It is found in the cytoskeleton. The protein localises to the microtubule organizing center. It localises to the centrosome. The protein resides in the spindle. Its subcellular location is the nucleus. It is found in the centriole. The protein localises to the cilium basal body. Functionally, plays an essential role in centriole growth by stabilizing a procentriolar seed composed of at least, SASS6 and CPAP. Required for anchoring microtubules to the centrosomes and for the integrity of the microtubule network. Recruits PPARA to discrete subcellular compartments and thereby modulates PPARA activity. Required for ciliation. The protein is Centrosome-associated protein 350 of Homo sapiens (Human).